A 200-amino-acid polypeptide reads, in one-letter code: Peptidyl-tRNA hydrolase (200 aa).

Y15 is a binding site for tRNA. H20 acts as the Proton acceptor in catalysis. Positions 66, 68, and 114 each coordinate tRNA.

The protein belongs to the PTH family. Monomer.

Its subcellular location is the cytoplasm. It carries out the reaction an N-acyl-L-alpha-aminoacyl-tRNA + H2O = an N-acyl-L-amino acid + a tRNA + H(+). Its function is as follows. Hydrolyzes ribosome-free peptidyl-tRNAs (with 1 or more amino acids incorporated), which drop off the ribosome during protein synthesis, or as a result of ribosome stalling. In terms of biological role, catalyzes the release of premature peptidyl moieties from peptidyl-tRNA molecules trapped in stalled 50S ribosomal subunits, and thus maintains levels of free tRNAs and 50S ribosomes. The polypeptide is Peptidyl-tRNA hydrolase (Ralstonia pickettii (strain 12J)).